A 487-amino-acid polypeptide reads, in one-letter code: uncharacterized protein (487 aa).

3 disordered regions span residues 35 to 153 (VSRK…SGDQ), 237 to 345 (NTTK…AKAL), and 358 to 395 (QKRK…SSAA). Residues 54 to 96 (FDQEDILDTVPEQTDENEDEAGDDELESEKEELDYDEEEDDED) show a composition bias toward acidic residues. Basic and acidic residues predominate over residues 97–132 (RRERTSRYTSEKKGSRKDSVEGDENKKENGQDETKR). Positions 241–253 (SKSRGRDTRKRRS) are enriched in basic residues. Low complexity predominate over residues 254–264 (SSYSSTSSSSD). Composition is skewed to basic and acidic residues over residues 273–338 (SRSD…KHSA) and 358–383 (QKRK…KKEV). Residues 385–395 (TTVSTNTSSAA) are compositionally biased toward low complexity.

This is an uncharacterized protein from Caenorhabditis elegans.